A 328-amino-acid chain; its full sequence is Formimidoylglutamase (328 aa).

Residues histidine 133, aspartate 159, histidine 161, aspartate 163, aspartate 253, and aspartate 255 each coordinate Mn(2+).

This sequence belongs to the arginase family. Mn(2+) is required as a cofactor.

It carries out the reaction N-formimidoyl-L-glutamate + H2O = formamide + L-glutamate. Its pathway is amino-acid degradation; L-histidine degradation into L-glutamate; L-glutamate from N-formimidoyl-L-glutamate (hydrolase route): step 1/1. Its function is as follows. Catalyzes the conversion of N-formimidoyl-L-glutamate to L-glutamate and formamide. This chain is Formimidoylglutamase, found in Streptococcus pyogenes serotype M5 (strain Manfredo).